Consider the following 231-residue polypeptide: Platelet-activating factor acetylhydrolase IB subunit alpha1 (231 aa).

An N-acetylserine modification is found at Ser-2. Ser-2 carries the phosphoserine modification. Residues Ser-47, Asp-192, and His-195 contribute to the active site.

Belongs to the 'GDSL' lipolytic enzyme family. Platelet-activating factor acetylhydrolase IB beta/gamma subunits subfamily. In terms of assembly, forms a catalytic dimer which is either homodimer (alpha1/alpha1 homodimer) or heterodimer with PAFAH1B2 (alpha1/alpha2 heterodimer). Component of the cytosolic (PAF-AH (I)) heterotetrameric enzyme, which is composed of PAFAH1B1 (beta), PAFAH1B2 (alpha2) and PAFAH1B3 (alpha1) subunits. The catalytic activity of the enzyme resides in the alpha1 (PAFAH1B3) and alpha2 (PAFAH1B2) subunits, whereas the beta subunit (PAFAH1B1) has regulatory activity. Trimer formation is not essential for the catalytic activity. Interacts with VLDLR; this interaction may modulate the Reelin pathway.

It localises to the cytoplasm. It catalyses the reaction a 1-O-alkyl-2-acetyl-sn-glycero-3-phosphocholine + H2O = a 1-O-alkyl-sn-glycero-3-phosphocholine + acetate + H(+). It carries out the reaction 1-O-hexadecyl-2-acetyl-sn-glycero-3-phosphocholine + H2O = 1-O-hexadecyl-sn-glycero-3-phosphocholine + acetate + H(+). The catalysed reaction is 1-O-hexadecyl-2-acetyl-sn-glycero-3-phosphate + H2O = 1-O-hexadecyl-sn-glycero-3-phosphate + acetate + H(+). With respect to regulation, beta subunit (PAFAH1B1) inhibits the acetylhydrolase activity of the alpha1/alpha1 catalytic homodimer. Alpha1 catalytic subunit of the cytosolic type I platelet-activating factor (PAF) acetylhydrolase (PAF-AH (I)) heterotetrameric enzyme that catalyzes the hydrolyze of the acetyl group at the sn-2 position of PAF and its analogs and modulates the action of PAF. The activity and substrate specificity of PAF-AH (I) are affected by its subunit composition. Both alpha1/alpha1 homodimer (PAFAH1B3/PAFAH1B3 homodimer) and alpha1/alpha2 heterodimer(PAFAH1B3/PAFAH1B2 heterodimer) hydrolyze 1-O-alkyl-2-acetyl-sn-glycero-3-phosphoric acid (AAGPA) more efficiently than PAF, but they have little hydrolytic activity towards 1-O-alkyl-2-acetyl-sn-glycero-3-phosphorylethanolamine (AAGPE). Plays an important role during the development of brain. The polypeptide is Platelet-activating factor acetylhydrolase IB subunit alpha1 (Pongo abelii (Sumatran orangutan)).